The primary structure comprises 624 residues: Elongation factor 4 (624 aa).

The 187-residue stretch at 17-203 folds into the tr-type G domain; the sequence is ALIRNFCIIA…RVVRDVPAPV (187 aa). GTP-binding positions include 29–34 and 150–153; these read DHGKST and NKID.

Belongs to the TRAFAC class translation factor GTPase superfamily. Classic translation factor GTPase family. LepA subfamily.

The protein localises to the cell membrane. It carries out the reaction GTP + H2O = GDP + phosphate + H(+). Functionally, required for accurate and efficient protein synthesis under certain stress conditions. May act as a fidelity factor of the translation reaction, by catalyzing a one-codon backward translocation of tRNAs on improperly translocated ribosomes. Back-translocation proceeds from a post-translocation (POST) complex to a pre-translocation (PRE) complex, thus giving elongation factor G a second chance to translocate the tRNAs correctly. Binds to ribosomes in a GTP-dependent manner. The protein is Elongation factor 4 of Streptomyces griseus subsp. griseus (strain JCM 4626 / CBS 651.72 / NBRC 13350 / KCC S-0626 / ISP 5235).